The primary structure comprises 132 residues: Large ribosomal subunit protein uL22c (132 aa).

It belongs to the universal ribosomal protein uL22 family. Part of the 50S ribosomal subunit.

It is found in the plastid. The protein resides in the chloroplast. This protein binds specifically to 23S rRNA. In terms of biological role, the globular domain of the protein is located near the polypeptide exit tunnel on the outside of the subunit, while an extended beta-hairpin is found that lines the wall of the exit tunnel in the center of the 70S ribosome. This is Large ribosomal subunit protein uL22c (rpl22) from Populus alba (White poplar).